The sequence spans 598 residues: Thiol:disulfide interchange protein DsbD (598 aa).

Residues 1–19 form the signal peptide; it reads MAYRIITLILLLCSTSATA. Cysteines 122 and 128 form a disulfide. Residues 147–187 form a disordered region; it reads DGQATAIEPMPSTSSRPAFNPPLPVEPRPAPELATSPAPAA. Residues 165–176 are compositionally biased toward pro residues; sequence FNPPLPVEPRPA. 7 helical membrane passes run 197-217, 242-262, 277-297, 330-350, 356-376, 391-411, and 423-443; these read LPFTALWALLIGIGIAFTPCV, LLAFIYVQGMALTYTALGLVV, YVLVGLSAVFILLALSMFGLF, IAGLICSPCTTAPLSAILLYI, LWLGGGTLYLYALGMGLPLIL, WMSHVKTAFGFVILALPVFLL, and LWSMLGVAFFSWAFITSLGAT. Cysteines 216 and 338 form a disulfide. One can recognise a Thioredoxin domain in the interval 459-598; it reads LVSARPLQDW…FSAHLRDWQA (140 aa). A disulfide bond links Cys513 and Cys516.

This sequence belongs to the thioredoxin family. DsbD subfamily.

It is found in the cell inner membrane. It carries out the reaction [protein]-dithiol + NAD(+) = [protein]-disulfide + NADH + H(+). It catalyses the reaction [protein]-dithiol + NADP(+) = [protein]-disulfide + NADPH + H(+). In terms of biological role, required to facilitate the formation of correct disulfide bonds in some periplasmic proteins and for the assembly of the periplasmic c-type cytochromes. Acts by transferring electrons from cytoplasmic thioredoxin to the periplasm. This transfer involves a cascade of disulfide bond formation and reduction steps. The protein is Thiol:disulfide interchange protein DsbD of Klebsiella pneumoniae subsp. pneumoniae (strain ATCC 700721 / MGH 78578).